We begin with the raw amino-acid sequence, 217 residues long: Putative peroxiredoxin Q, chloroplastic (217 aa).

The N-terminal 66 residues, 1–66, are a transit peptide targeting the chloroplast; sequence MAFAVSTACR…PSTTGRNRIV (66 aa). In terms of domain architecture, Thioredoxin spans 70–217; sequence VSKGSAAPNF…GETLKILQSL (148 aa). Cys-112 acts as the Cysteine sulfenic acid (-SOH) intermediate in catalysis. The cysteines at positions 112 and 117 are disulfide-linked.

Belongs to the peroxiredoxin family. BCP/PrxQ subfamily. In terms of assembly, monomer.

The protein localises to the plastid. It is found in the chloroplast thylakoid lumen. The catalysed reaction is a hydroperoxide + [thioredoxin]-dithiol = an alcohol + [thioredoxin]-disulfide + H2O. Its function is as follows. Thiol-specific peroxidase that catalyzes the reduction of hydrogen peroxide and organic hydroperoxides to water and alcohols, respectively. Plays a role in cell protection against oxidative stress by detoxifying peroxides. The chain is Putative peroxiredoxin Q, chloroplastic from Oryza sativa subsp. indica (Rice).